Here is a 129-residue protein sequence, read N- to C-terminus: Lysozyme C (129 aa).

In terms of domain architecture, C-type lysozyme spans 1–129 (KVYGRCELAA…VHAWIRGCRL (129 aa)). 4 disulfide bridges follow: C6/C127, C30/C115, C64/C80, and C76/C94. Active-site residues include E35 and D52.

This sequence belongs to the glycosyl hydrolase 22 family. Monomer.

Its subcellular location is the secreted. It catalyses the reaction Hydrolysis of (1-&gt;4)-beta-linkages between N-acetylmuramic acid and N-acetyl-D-glucosamine residues in a peptidoglycan and between N-acetyl-D-glucosamine residues in chitodextrins.. Lysozymes have primarily a bacteriolytic function; those in tissues and body fluids are associated with the monocyte-macrophage system and enhance the activity of immunoagents. The protein is Lysozyme C (LYZ) of Tragopan temminckii (Temminck's tragopan).